We begin with the raw amino-acid sequence, 375 residues long: Growth/differentiation factor 8 (375 aa).

Residues 1-18 (MQKLQISVYIYLFVLILA) form the signal peptide. Residues 19–266 (GPVDLNENSE…VTDTPKRSRR (248 aa)) constitute a propeptide that is removed on maturation. N-linked (GlcNAc...) asparagine glycosylation occurs at Asn-71. 4 cysteine pairs are disulfide-bonded: Cys-272/Cys-282, Cys-281/Cys-340, Cys-309/Cys-372, and Cys-313/Cys-374.

Belongs to the TGF-beta family. As to quaternary structure, homodimer; disulfide-linked. Interacts with WFIKKN2, leading to inhibit its activity. Interacts with FSTL3. In terms of processing, synthesized as large precursor molecule that undergoes proteolytic cleavage to generate an N-terminal propeptide and a disulfide linked C-terminal dimer, which is the biologically active molecule. The circulating form consists of a latent complex of the C-terminal dimer and other proteins, including its propeptide, which maintain the C-terminal dimer in a latent, inactive state. Ligand activation requires additional cleavage of the prodomain by a tolloid-like metalloproteinase.

The protein resides in the secreted. Functionally, acts specifically as a negative regulator of skeletal muscle growth. The chain is Growth/differentiation factor 8 (MSTN) from Equus caballus (Horse).